We begin with the raw amino-acid sequence, 160 residues long: Thioredoxin-like protein 4A homolog (160 aa).

Residues 132–160 form a disordered region; the sequence is KFLKKKKKKKNKKKQKKKIKKIKKKIKNN. The segment covering 133 to 160 has biased composition (basic residues); it reads FLKKKKKKKNKKKQKKKIKKIKKKIKNN.

The protein belongs to the DIM1 family. In terms of assembly, component of the precatalytic spliceosome (spliceosome B complex). Component of the U5 snRNP complex. Component of the U4/U6-U5 tri-snRNP complex.

It is found in the nucleus. Its function is as follows. Plays a role in pre-mRNA splicing as component of the U5 snRNP and U4/U6-U5 tri-snRNP complexes that are involved in spliceosome assembly, and as component of the precatalytic spliceosome (spliceosome B complex). This is Thioredoxin-like protein 4A homolog (txnl4a) from Dictyostelium discoideum (Social amoeba).